Here is a 327-residue protein sequence, read N- to C-terminus: Malate dehydrogenase 1 (327 aa).

12–18 (GAAGQIA) serves as a coordination point for NAD(+). The substrate site is built by Arg-93 and Arg-99. NAD(+) is bound by residues Asn-106, Gln-113, and 130–132 (VGN). Residues Asn-132 and Arg-163 each contribute to the substrate site. The active-site Proton acceptor is His-188.

It belongs to the LDH/MDH superfamily. MDH type 2 family.

It catalyses the reaction (S)-malate + NAD(+) = oxaloacetate + NADH + H(+). Functionally, catalyzes the reversible oxidation of malate to oxaloacetate. This chain is Malate dehydrogenase 1, found in Burkholderia thailandensis (strain ATCC 700388 / DSM 13276 / CCUG 48851 / CIP 106301 / E264).